A 701-amino-acid chain; its full sequence is Polyribonucleotide nucleotidyltransferase (701 aa).

Mg(2+) is bound by residues Asp-487 and Asp-493. The KH domain maps to 554 to 613 (PTMLAMKIDQDKIRDVIGKGGATIRAICEETKASIDIEDDGSIKIFGETKEAAEAAKQRV). Residues 623 to 691 (GKIYVGKVER…NRGRIKLSIK (69 aa)) form the S1 motif domain.

The protein belongs to the polyribonucleotide nucleotidyltransferase family. Component of the RNA degradosome, which is a multiprotein complex involved in RNA processing and mRNA degradation. The cofactor is Mg(2+).

Its subcellular location is the cytoplasm. It catalyses the reaction RNA(n+1) + phosphate = RNA(n) + a ribonucleoside 5'-diphosphate. Functionally, involved in mRNA degradation. Catalyzes the phosphorolysis of single-stranded polyribonucleotides processively in the 3'- to 5'-direction. The polypeptide is Polyribonucleotide nucleotidyltransferase (Stutzerimonas stutzeri (strain A1501) (Pseudomonas stutzeri)).